The primary structure comprises 879 residues: Alanine--tRNA ligase (879 aa).

Residues H566, H570, C668, and H672 each coordinate Zn(2+).

It belongs to the class-II aminoacyl-tRNA synthetase family. It depends on Zn(2+) as a cofactor.

It is found in the cytoplasm. The catalysed reaction is tRNA(Ala) + L-alanine + ATP = L-alanyl-tRNA(Ala) + AMP + diphosphate. In terms of biological role, catalyzes the attachment of alanine to tRNA(Ala) in a two-step reaction: alanine is first activated by ATP to form Ala-AMP and then transferred to the acceptor end of tRNA(Ala). Also edits incorrectly charged Ser-tRNA(Ala) and Gly-tRNA(Ala) via its editing domain. This is Alanine--tRNA ligase from Clostridium beijerinckii (strain ATCC 51743 / NCIMB 8052) (Clostridium acetobutylicum).